Here is a 66-residue protein sequence, read N- to C-terminus: Large ribosomal subunit protein uL30 (66 aa).

Belongs to the universal ribosomal protein uL30 family. Part of the 50S ribosomal subunit.

The chain is Large ribosomal subunit protein uL30 from Chelativorans sp. (strain BNC1).